Here is a 538-residue protein sequence, read N- to C-terminus: Interleukin-21 receptor (538 aa).

The signal sequence occupies residues 1 to 19 (MPRGWAAPLLLLLLQGGWG). Cystine bridges form between C20-C109, C25-C35, and C65-C81. The Extracellular portion of the chain corresponds to 20–232 (CPDLVCYTDY…FQTQSEELKE (213 aa)). Fibronectin type-III domains are found at residues 21-118 (PDLV…AESI) and 119-228 (KPAP…TQSE). N73, N97, N104, N125, and N135 each carry an N-linked (GlcNAc...) asparagine glycan. C-linked (Man) tryptophan glycosylation occurs at W214. The WSXWS motif signature appears at 214-218 (WSEWS). Residues 233–253 (GWNPHLLLLLLLVIVFIPAFW) form a helical membrane-spanning segment. Over 254–538 (SLKTHPLWRL…PLSSPGPQAS (285 aa)) the chain is Cytoplasmic. The short motif at 266–274 (KIWAVPSPE) is the Box 1 motif element. Disordered regions lie at residues 342–367 (ESDG…SEER) and 457–487 (EDWA…GLDM).

It belongs to the type I cytokine receptor family. Type 4 subfamily. In terms of assembly, heterodimer with the common gamma subunit. Associates with JAK1. In terms of processing, C-mannosylated at Trp-214 in the WSXWS motif, the sugar chain makes extensive hydrogen bonds with Asn-73 sugar, and bridges the two fibronectin domains transforming the V-shaped receptor into an A-frame. As to expression, selectively expressed in lymphoid tissues. Most highly expressed in thymus and spleen.

Its subcellular location is the membrane. In terms of biological role, this is a receptor for interleukin-21. The protein is Interleukin-21 receptor (IL21R) of Homo sapiens (Human).